The chain runs to 667 residues: Polypeptide N-acetylgalactosaminyltransferase 3 (667 aa).

Over 1-12 (MGLRFQQLKKLW) the chain is Cytoplasmic. Residues 13–35 (LLYLFLLFFAFFMFAISINLYVA) form a helical; Signal-anchor for type II membrane protein membrane-spanning segment. Topologically, residues 36–667 (SIQGGDAEMR…WGFIPLPWRM (632 aa)) are lumenal. N-linked (GlcNAc...) asparagine glycosylation is found at asparagine 75 and asparagine 129. 5 disulfides stabilise this stretch: cysteine 140-cysteine 375, cysteine 366-cysteine 446, cysteine 526-cysteine 547, cysteine 572-cysteine 601, and cysteine 626-cysteine 649. The segment at 149-259 (LPSTSVIIVF…RGWLEPLLSR (111 aa)) is catalytic subdomain A. The substrate site is built by aspartate 190 and arginine 220. Mn(2+)-binding residues include aspartate 243 and histidine 245. Residues asparagine 279 and asparagine 313 are each glycosylated (N-linked (GlcNAc...) asparagine). Positions 321 to 383 (PIATPGMAGG…PCSHVGHVFR (63 aa)) are catalytic subdomain B. Tryptophan 352 provides a ligand contact to substrate. Histidine 380 is a Mn(2+) binding site. The substrate site is built by arginine 383 and tyrosine 388. Asparagine 433 is a glycosylation site (N-linked (GlcNAc...) asparagine). In terms of domain architecture, Ricin B-type lectin spans 513-661 (EELMALIDLE…KDITQKWGFI (149 aa)). N-linked (GlcNAc...) asparagine glycosylation is present at asparagine 590.

Belongs to the glycosyltransferase 2 family. GalNAc-T subfamily. Mn(2+) is required as a cofactor. As to expression, expressed in developing oocytes and egg chambers. During embryonic stages 9-11, expressed in the primordiums of the foregut, midgut and hindgut. During embryonic stages 12-13, expression is found uniquely in the posterior spiracle. During embryonic stages 14-17, expressed in the pharynx, esophagus and posterior spiracles. Expression observed in the epidermis during embryonic stages 16-17. In third instar larvae, expressed ubiquitously in wing, with increased expression in pleura and notum, eye-antennal, leg and haltere imaginal disks.

It localises to the golgi apparatus membrane. The catalysed reaction is L-seryl-[protein] + UDP-N-acetyl-alpha-D-galactosamine = a 3-O-[N-acetyl-alpha-D-galactosaminyl]-L-seryl-[protein] + UDP + H(+). It carries out the reaction L-threonyl-[protein] + UDP-N-acetyl-alpha-D-galactosamine = a 3-O-[N-acetyl-alpha-D-galactosaminyl]-L-threonyl-[protein] + UDP + H(+). It participates in protein modification; protein glycosylation. Catalyzes the initial reaction in O-linked oligosaccharide biosynthesis, the transfer of an N-acetyl-D-galactosamine residue to a serine or threonine residue on the protein receptor. It can both act as a peptide transferase that transfers GalNAc onto unmodified peptide substrates, and as a glycopeptide transferase that requires the prior addition of a GalNAc on a peptide before adding additional GalNAc moieties. Prefers EA2 as substrate. Has weak activity toward Muc5AC-3, -13 and -3/13 substrates. Plays a critical role in the regulation of integrin-mediated cell adhesion during wing development by influencing, via glycosylation, the secretion and localization of the integrin ligand Tig to the basal cell layer interface. Might have a role in protein O-glycosylation in the Golgi and thereby in establishing and/or maintaining a proper secretory apparatus structure. Together with Pgant35A, regulates integrin levels and activity-dependent integrin signaling at the synapse in neurons and muscles. This Drosophila melanogaster (Fruit fly) protein is Polypeptide N-acetylgalactosaminyltransferase 3.